The chain runs to 659 residues: Putative cysteine-rich receptor-like protein kinase 39 (659 aa).

The signal sequence occupies residues 1 to 27 (MGKYSVLMIFIASSLLIVLQNVEIVNA). Gnk2-homologous domains follow at residues 28 to 134 (VGCT…NHST) and 142 to 253 (PSVR…LYAF). The Extracellular segment spans residues 28-289 (VGCTGSFFNG…KKKGRSIGYG (262 aa)). Asn-38, Asn-64, Asn-122, Asn-131, Asn-157, Asn-170, Asn-259, and Asn-274 each carry an N-linked (GlcNAc...) asparagine glycan. Residues 290-310 (GIIAIVVVLTFINILVFIGYI) traverse the membrane as a helical segment. Topologically, residues 311-659 (KVYGRRKESY…DDVFTELSCR (349 aa)) are cytoplasmic. The region spanning 353 to 619 (FSSENTLGQG…PTMSSVIIWL (267 aa)) is the Protein kinase domain. Residues 359–367 (LGQGGFGTV) and Lys-381 contribute to the ATP site. Tyr-426 is subject to Phosphotyrosine. The active-site Proton acceptor is the Asp-478. Position 482 is a phosphoserine (Ser-482). Thr-518 is modified (phosphothreonine). Tyr-526 is subject to Phosphotyrosine.

This sequence belongs to the protein kinase superfamily. Ser/Thr protein kinase family. CRK subfamily.

The protein resides in the membrane. The catalysed reaction is L-seryl-[protein] + ATP = O-phospho-L-seryl-[protein] + ADP + H(+). The enzyme catalyses L-threonyl-[protein] + ATP = O-phospho-L-threonyl-[protein] + ADP + H(+). This Arabidopsis thaliana (Mouse-ear cress) protein is Putative cysteine-rich receptor-like protein kinase 39 (CRK39).